A 942-amino-acid polypeptide reads, in one-letter code: DNA polymerase I (942 aa).

The 5'-3' exonuclease domain occupies 177–269 (EPDQLADLRG…LEAARIGVYD (93 aa)). Residues 340–522 (TIVRDATALA…LTERLQRQLE (183 aa)) form the 3'-5' exonuclease domain.

This sequence belongs to the DNA polymerase type-A family. As to quaternary structure, single-chain monomer with multiple functions.

It catalyses the reaction DNA(n) + a 2'-deoxyribonucleoside 5'-triphosphate = DNA(n+1) + diphosphate. In terms of biological role, in addition to polymerase activity, this DNA polymerase exhibits 3'-5' and 5'-3' exonuclease activity. The protein is DNA polymerase I (polA) of Chloroflexus aurantiacus (strain ATCC 29366 / DSM 635 / J-10-fl).